A 305-amino-acid polypeptide reads, in one-letter code: Ribonuclease BN (305 aa).

Residues H64, H66, D68, H69, H141, D212, and H270 each coordinate Zn(2+). The active-site Proton acceptor is the D68.

Belongs to the RNase Z family. RNase BN subfamily. Homodimer. Zn(2+) serves as cofactor.

Its function is as follows. Zinc phosphodiesterase, which has both exoribonuclease and endoribonuclease activities. The sequence is that of Ribonuclease BN from Escherichia coli O157:H7.